A 130-amino-acid chain; its full sequence is Fumarate reductase subunit D (130 aa).

Helical transmembrane passes span 35 to 55 (FAMI…LGVI), 67 to 87 (SFAT…LPMW), and 110 to 130 (IACY…IFMI).

The protein belongs to the FrdD family. As to quaternary structure, part of an enzyme complex containing four subunits: a flavoprotein (FrdA), an iron-sulfur protein (FrdB), and two hydrophobic anchor proteins (FrdC and FrdD).

It localises to the cell inner membrane. Anchors the catalytic components of the fumarate reductase complex to the cell membrane, binds quinones. This is Fumarate reductase subunit D from Vibrio cholerae serotype O1 (strain M66-2).